Reading from the N-terminus, the 166-residue chain is MFPMVTEFMNYGQQTVRAARYIGQGFMITLSHANRLPVTIQYPYEKLITSERFRGRIHFEFDKCIACEVCVRVCPIDLPVVDWKLETDIRKKRLLNYSIDFGICIFCGNCVEYCPTNCLSMTEEYELSTYDRHELNYNQIALGRLPMSIIDDYTIRTILNLPEIKT.

4Fe-4S ferredoxin-type domains are found at residues 55–84 (GRIH…VDWK) and 95–124 (LNYS…MTEE). Cysteine 64, cysteine 67, cysteine 70, cysteine 74, cysteine 104, cysteine 107, cysteine 110, and cysteine 114 together coordinate [4Fe-4S] cluster.

The protein belongs to the complex I 23 kDa subunit family. In terms of assembly, NDH is composed of at least 16 different subunits, 5 of which are encoded in the nucleus. The cofactor is [4Fe-4S] cluster.

The protein resides in the plastid. Its subcellular location is the chloroplast thylakoid membrane. The enzyme catalyses a plastoquinone + NADH + (n+1) H(+)(in) = a plastoquinol + NAD(+) + n H(+)(out). It carries out the reaction a plastoquinone + NADPH + (n+1) H(+)(in) = a plastoquinol + NADP(+) + n H(+)(out). Its function is as follows. NDH shuttles electrons from NAD(P)H:plastoquinone, via FMN and iron-sulfur (Fe-S) centers, to quinones in the photosynthetic chain and possibly in a chloroplast respiratory chain. The immediate electron acceptor for the enzyme in this species is believed to be plastoquinone. Couples the redox reaction to proton translocation, and thus conserves the redox energy in a proton gradient. This is NAD(P)H-quinone oxidoreductase subunit I, chloroplastic from Pericome caudata (Mountain tail-leaf).